Here is a 63-residue protein sequence, read N- to C-terminus: 2-hydroxymuconate tautomerase (63 aa).

Proline 2 functions as the Proton acceptor; via imino nitrogen in the catalytic mechanism.

It belongs to the 4-oxalocrotonate tautomerase family. In terms of assembly, homohexamer.

The catalysed reaction is (2Z,4E)-2-hydroxyhexa-2,4-dienedioate = (3E)-2-oxohex-3-enedioate. The protein operates within aromatic compound metabolism; salicylate degradation. Catalyzes the ketonization of 2-hydroxymuconate stereoselectively to yield 2-oxo-3-hexenedioate. This Comamonas testosteroni (Pseudomonas testosteroni) protein is 2-hydroxymuconate tautomerase (aphI).